Reading from the N-terminus, the 204-residue chain is MSKINKEIAIFIVFLILVALWGLFVKVPVEETKTPDPESQVSGMTIQFKDGISESEVRTILQNCNMTRNYRMTYDNSSEDYYIMADKDNWSDIRRELVDEMKETNKKNWTVSTPAHVIRKEDYYVLPISGQAIKDEKFLAILDKYDIGVEKFLWCDISFLYSDGPLTYWIPKEDAIRIKNELEQNDNIFSVQFDYLFPPFDPTT.

This sequence belongs to the UPF0228 family.

This Methanosarcina acetivorans (strain ATCC 35395 / DSM 2834 / JCM 12185 / C2A) protein is UPF0228 protein MA_0511.